The sequence spans 222 residues: 3-demethoxyubiquinol 3-hydroxylase (222 aa).

Residues Glu71, Glu101, His104, Glu153, Glu185, and His188 each contribute to the Fe cation site.

This sequence belongs to the COQ7 family. Fe cation serves as cofactor.

The protein resides in the cell membrane. The catalysed reaction is a 5-methoxy-2-methyl-3-(all-trans-polyprenyl)benzene-1,4-diol + AH2 + O2 = a 3-demethylubiquinol + A + H2O. It participates in cofactor biosynthesis; ubiquinone biosynthesis. Functionally, catalyzes the hydroxylation of 2-nonaprenyl-3-methyl-6-methoxy-1,4-benzoquinol during ubiquinone biosynthesis. In Bordetella bronchiseptica (strain ATCC BAA-588 / NCTC 13252 / RB50) (Alcaligenes bronchisepticus), this protein is 3-demethoxyubiquinol 3-hydroxylase.